The following is a 219-amino-acid chain: Small ribosomal subunit protein uS3 (219 aa).

The KH type-2 domain occupies Ile-38–Lys-106.

Belongs to the universal ribosomal protein uS3 family. Part of the 30S ribosomal subunit. Forms a tight complex with proteins S10 and S14.

Binds the lower part of the 30S subunit head. Binds mRNA in the 70S ribosome, positioning it for translation. This is Small ribosomal subunit protein uS3 from Lachnoclostridium phytofermentans (strain ATCC 700394 / DSM 18823 / ISDg) (Clostridium phytofermentans).